Consider the following 203-residue polypeptide: Outer-membrane lipoprotein carrier protein (203 aa).

The N-terminal stretch at 1–21 is a signal peptide; sequence MKKLAITCALLSGMVVSQVWA. Residues 184–203 are disordered; that stretch reads DASKFTFTPPKGVTVDDQRK.

The protein belongs to the LolA family. Monomer.

It localises to the periplasm. In terms of biological role, participates in the translocation of lipoproteins from the inner membrane to the outer membrane. Only forms a complex with a lipoprotein if the residue after the N-terminal Cys is not an aspartate (The Asp acts as a targeting signal to indicate that the lipoprotein should stay in the inner membrane). The polypeptide is Outer-membrane lipoprotein carrier protein (Klebsiella pneumoniae (strain 342)).